The primary structure comprises 456 residues: Phosphomethylpyrimidine synthase (456 aa).

Residues Asn-80, Met-109, Tyr-139, His-175, 195–197 (SRG), 236–239 (DSLR), and Glu-275 contribute to the substrate site. His-279 serves as a coordination point for Zn(2+). Residue Tyr-302 coordinates substrate. His-343 is a binding site for Zn(2+). Cys-423, Cys-426, and Cys-431 together coordinate [4Fe-4S] cluster.

This sequence belongs to the ThiC family. Requires [4Fe-4S] cluster as cofactor.

It catalyses the reaction 5-amino-1-(5-phospho-beta-D-ribosyl)imidazole + S-adenosyl-L-methionine = 4-amino-2-methyl-5-(phosphooxymethyl)pyrimidine + CO + 5'-deoxyadenosine + formate + L-methionine + 3 H(+). It participates in cofactor biosynthesis; thiamine diphosphate biosynthesis. Its function is as follows. Catalyzes the synthesis of the hydroxymethylpyrimidine phosphate (HMP-P) moiety of thiamine from aminoimidazole ribotide (AIR) in a radical S-adenosyl-L-methionine (SAM)-dependent reaction. The protein is Phosphomethylpyrimidine synthase of Prochlorococcus marinus (strain MIT 9301).